Consider the following 1309-residue polypeptide: MEAEKDSGRRLRAIDRQRYDENEDLSDVEEIVSVRGFSLEEKLRSQLYQGDFVHAMEGKDFNYEYVQREALRVPLVFRDKDGLGIKMPDPDFTVRDVKLLVGSRRLVDVMDVNTQKGTEMSMSQFVRYYETPEAQRDKLYNVISLEFSHTKLEHLVKRPTVVDLVDWVDNMWPQHLKEKQTEATNALAEMKYPKVKKYCLMSVKGCFTDFHIDFGGTSVWYHVFRGGKIFWLIPPTLHNLALYEEWVLSGKQSDIFLGDRVERCQRIELKQGYTFFIPSGWIHAVYTPVDSLVFGGNILHSFNVPMQLRIYEIEDRTRVQPKFRYPFYYEMCWYVLERYVYCVTQRSYLTQEYQRELMLIDAPRKTSVDGFSSDSWLDMEEESCEQQPQEEEEEEEDKEEEGDGADKTPKPPTDDPTSPTSTPPEDQDSTGKKPKAPAIRFLKRTLSNESEESVKSTSMPTDDPKTPTGSPATEVSTKWTHLTEFELKGLKALVEKLESLPENKKCVPEGIEDPQALLEGVKNVLKEHVDDDPTLAITGVPVVSWPKKTAKNRVVGRPKGKLGPASAVKLAANRTTAGARRRRTRCRKCEACLRTECGECHFCKDMKKFGGPGRMKQSCIMRQCIAPVLPHTAVCLVCGEAGKEDTVEEEEGKFNLMLMECSICNEIIHPGCLKIKESEGVVNDELPNCWECPKCNHAGKTGKQKRGPGFKYASNLPGSLLKEQKMNRDNKEGQEPAKRRSECEEAPRRRSDEHPKKVPADGILRRKSDDVHLRRKRKYEKPQELSGRKRASSLQTSPGSSSHLSPRPPLGSSLSPWWRSSLTYFQQQLKPGKEDKLFRKKRRSWKNAEDRLSLANKPLRRFKQEPEDDLPEAPPKTRESDQSRSSSPTAGPSTEGAEGPEEKKKVKMRRKRRLVNKELSKELSKELNHEIQKTESTLAHESQQPIKSEPESENDEPKRPLSHCERPHRFSKGLNGTPRELRHSLGPGLRSPPRVMSRPPPSASPPKCIQMERHVIRPPPISPPPDSLPLDDGAAHVMHREVWMAVFSYLSHRDLCVCMRVCRTWNRWCCDKRLWTRIDLNRCKSITPLMLSGIIRRQPVSLDLSWTNISKKQLSWLINRLPGLRDLVLSGCSWIAVSALCSSSCPLLRTLDVQWVEGLKDAQMRDLLSPPTDNRPGQMDNRSKLRNIVELRLAGLDITDVSLRLIIRHMPLLSKLQLSYCNHINDQSINLLTAVGTTTRDSLTEVNLSDCNKVTDLCLSFFKRCGNICHIDLRYCKQVTKEGCEQFIAEMSVSVQFGQVEEKLLQKLS.

The residue at position 26 (serine 26) is a Phosphoserine. In terms of domain architecture, JmjC spans 147 to 315; sequence FSHTKLEHLV…MQLRIYEIED (169 aa). Threonine 208 contacts substrate. Residues histidine 211 and aspartate 213 each contribute to the Fe cation site. Lysine 228 contributes to the substrate binding site. Histidine 283 serves as a coordination point for Fe cation. Residues 378-403 are compositionally biased toward acidic residues; sequence DMEEESCEQQPQEEEEEEEDKEEEGD. A disordered region spans residues 378-476; it reads DMEEESCEQQ…PTGSPATEVS (99 aa). Basic and acidic residues predominate over residues 404–413; sequence GADKTPKPPT. Residues 415–424 are compositionally biased toward low complexity; sequence DPTSPTSTPP. Phosphoserine is present on residues serine 447 and serine 450. A Phosphothreonine modification is found at threonine 466. Polar residues predominate over residues 467–476; that stretch reads PTGSPATEVS. A Phosphoserine modification is found at serine 470. The segment at 579–625 adopts a CXXC-type zinc-finger fold; it reads ARRRRTRCRKCEACLRTECGECHFCKDMKKFGGPGRMKQSCIMRQCI. Zn(2+)-binding residues include cysteine 586, cysteine 589, cysteine 592, cysteine 597, cysteine 600, cysteine 603, cysteine 619, cysteine 624, cysteine 635, cysteine 638, cysteine 661, cysteine 664, histidine 669, cysteine 672, cysteine 692, and cysteine 695. The segment at 632 to 698 adopts a PHD-type zinc-finger fold; the sequence is TAVCLVCGEA…CWECPKCNHA (67 aa). Disordered stretches follow at residues 700-816 and 828-1005; these read KTGK…SLSP and QLKP…SASP. Over residues 722–772 the composition is skewed to basic and acidic residues; sequence KEQKMNRDNKEGQEPAKRRSECEEAPRRRSDEHPKKVPADGILRRKSDDVH. Positions 792–816 are enriched in low complexity; that stretch reads SSLQTSPGSSSHLSPRPPLGSSLSP. Glycyl lysine isopeptide (Lys-Gly) (interchain with G-Cter in SUMO2) cross-links involve residues lysine 830 and lysine 863. Over residues 883–892 the composition is skewed to polar residues; that stretch reads SRSSSPTAGP. Positions 905–914 are enriched in basic residues; the sequence is KVKMRRKRRL. Basic and acidic residues predominate over residues 915 to 933; the sequence is VNKELSKELSKELNHEIQK. A coiled-coil region spans residues 916–944; that stretch reads NKELSKELSKELNHEIQKTESTLAHESQQ. Serine 924 carries the phosphoserine modification. Residues 934-946 show a composition bias toward polar residues; sequence TESTLAHESQQPI. 2 positions are modified to phosphoserine: serine 948 and serine 952. Over residues 955 to 968 the composition is skewed to basic and acidic residues; that stretch reads DEPKRPLSHCERPH. Serine 991 and serine 1004 each carry phosphoserine. The F-box domain occupies 1032-1078; that stretch reads DGAAHVMHREVWMAVFSYLSHRDLCVCMRVCRTWNRWCCDKRLWTRI. 6 LRR repeats span residues 1106 to 1127, 1129 to 1155, 1195 to 1220, 1221 to 1250, 1251 to 1275, and 1276 to 1309; these read WTNISKKQLSWLINRLPGLRDL, LSGCSWIAVSALCSSSCPLLRTLDVQW, GLDITDVSLRLIIRHMPLLSKLQLSY, CNHINDQSINLLTAVGTTTRDSLTEVNLSD, CNKVTDLCLSFFKRCGNICHIDLRY, and CKQVTKEGCEQFIAEMSVSVQFGQVEEKLLQKLS.

This sequence belongs to the JHDM1 histone demethylase family. As to quaternary structure, interacts with SKP1, forming heterodimers. The KDM2B-SKP1 heterodimeric complex interacts with the PCGF1-BCORL heterodimeric complex to form a homotetrameric polycomb repression complex 1 (PRC1.1). Directly interacts with CUL1. The SKP1-KDM2B interacts with UBB. Fe(2+) serves as cofactor.

Its subcellular location is the nucleus. It is found in the nucleolus. The protein localises to the chromosome. It catalyses the reaction N(6),N(6)-dimethyl-L-lysyl(36)-[histone H3] + 2 2-oxoglutarate + 2 O2 = L-lysyl(36)-[histone H3] + 2 formaldehyde + 2 succinate + 2 CO2. With respect to regulation, histone demethylase activity is inhibited by fumarate. Histone demethylase that demethylates 'Lys-4' and 'Lys-36' of histone H3, thereby playing a central role in histone code. Preferentially demethylates trimethylated H3 'Lys-4' and dimethylated H3 'Lys-36' residue while it has weak or no activity for mono- and tri-methylated H3 'Lys-36'. Preferentially binds the transcribed region of ribosomal RNA and represses the transcription of ribosomal RNA genes which inhibits cell growth and proliferation. May also serve as a substrate-recognition component of the SCF (SKP1-CUL1-F-box protein)-type E3 ubiquitin ligase complex. This is Lysine-specific demethylase 2B (Kdm2b) from Mus musculus (Mouse).